A 357-amino-acid polypeptide reads, in one-letter code: Olfactory receptor 2B2 (357 aa).

Over 1 to 25 the chain is Extracellular; it reads MNWVNKSVPQEFILLVFSDQPWLEI. N-linked (GlcNAc...) asparagine glycosylation occurs at Asn-5. A helical transmembrane segment spans residues 26 to 49; that stretch reads PPFVMFLFSYILTIFGNLTIILVS. Residues 50–57 lie on the Cytoplasmic side of the membrane; it reads HVDFKLHT. The helical transmembrane segment at 58–79 threads the bilayer; that stretch reads PMYFFLSNLSLLDLCYTTSTVP. Residues 80-100 lie on the Extracellular side of the membrane; the sequence is QMLVNICNTRKVISYGGCVAQ. An intrachain disulfide couples Cys-97 to Cys-189. A helical transmembrane segment spans residues 101 to 120; it reads LFIFLALGSTECLLLAVMCF. Topologically, residues 121 to 139 are cytoplasmic; sequence DRFVAICRPLHYSIIMHQR. A helical membrane pass occupies residues 140 to 158; it reads LCFQLAAASWISGFSNSVL. The Extracellular segment spans residues 159–195; sequence QSTWTLKMPLCGHKEVDHFFCEVPALLKLSCVDTTAN. Residues 196 to 219 traverse the membrane as a helical segment; sequence EAELFFISVLFLLIPVTLILISYA. At 220-236 the chain is on the cytoplasmic side; sequence FIVQAVLRIQSAEGQRK. The chain crosses the membrane as a helical span at residues 237–259; that stretch reads AFGTCGSHLIVVSLFYGTAISMY. At 260-272 the chain is on the extracellular side; that stretch reads LQPPSPSSKDRGK. A helical membrane pass occupies residues 273-292; that stretch reads MVSLFCGIIAPMLNPLIYTL. Residues 293–357 lie on the Cytoplasmic side of the membrane; the sequence is RNKEVKEAFK…YCNLPQRKFP (65 aa).

It belongs to the G-protein coupled receptor 1 family.

Its subcellular location is the cell membrane. Functionally, odorant receptor. This Homo sapiens (Human) protein is Olfactory receptor 2B2 (OR2B2).